A 37-amino-acid polypeptide reads, in one-letter code: U4-theraphotoxin-Hhn1v (37 aa).

3 disulfides stabilise this stretch: cysteine 3/cysteine 17, cysteine 7/cysteine 28, and cysteine 22/cysteine 33.

It belongs to the neurotoxin 12 (Hwtx-2) family. 02 (Hwtx-2) subfamily. Expressed by the venom gland.

It localises to the secreted. Its function is as follows. Postsynaptic neurotoxin. The sequence is that of U4-theraphotoxin-Hhn1v from Cyriopagopus hainanus (Chinese bird spider).